The sequence spans 169 residues: MNKPICSTGLRWLWLAVVVVILDISSKQWVMAHFALYESVPLIPFFNLTYAQNFGAAFSFLADKSGWQRWFFAGIAIGISVVLMVMMYRSTAKQRLINCAYALIIGGALGNLYDRLVHGAVNDFLDFYINNWHFPTFNLADVAISIGAVLVIFEGFLSPAEKNAVNKNE.

Transmembrane regions (helical) follow at residues 4-24 (PICS…ILDI), 29-49 (WVMA…FNLT), 70-90 (WFFA…MYRS), and 101-121 (YALI…HGAV). Residues D123 and D141 contribute to the active site. The helical transmembrane segment at 137-157 (FNLADVAISIGAVLVIFEGFL) threads the bilayer.

It belongs to the peptidase A8 family.

It localises to the cell inner membrane. It catalyses the reaction Release of signal peptides from bacterial membrane prolipoproteins. Hydrolyzes -Xaa-Yaa-Zaa-|-(S,diacylglyceryl)Cys-, in which Xaa is hydrophobic (preferably Leu), and Yaa (Ala or Ser) and Zaa (Gly or Ala) have small, neutral side chains.. The protein operates within protein modification; lipoprotein biosynthesis (signal peptide cleavage). This protein specifically catalyzes the removal of signal peptides from prolipoproteins. The sequence is that of Lipoprotein signal peptidase from Yersinia pseudotuberculosis serotype O:1b (strain IP 31758).